We begin with the raw amino-acid sequence, 435 residues long: T-box transcription factor T (435 aa).

Residues 51 to 219 (LWLRFKELTN…YNPFAKAFLD (169 aa)) constitute a DNA-binding region (T-box). Disordered stretches follow at residues 280–310 (PALR…PSAC) and 384–412 (APLG…DVPD). Positions 297 to 310 (RNNSPTYSDNPSAC) are enriched in polar residues.

Monomer. Binds DNA as a monomer.

It localises to the nucleus. In terms of biological role, involved in the transcriptional regulation of genes required for mesoderm formation and differentiation. Binds to a palindromic site (called T site) and activates gene transcription when bound to such a site. The chain is T-box transcription factor T from Canis lupus familiaris (Dog).